The primary structure comprises 201 residues: Putative manganese efflux pump MntP 2 (201 aa).

6 helical membrane passes run 3–23 (LISV…VSIT), 39–59 (IGLF…SIGI), 65–85 (IAAL…GKMI), 116–136 (LILL…SFAF), 141–161 (IINT…IGVM), and 176–196 (ILGG…HTNI).

Belongs to the MntP (TC 9.B.29) family.

It localises to the cell membrane. In terms of biological role, probably functions as a manganese efflux pump. The chain is Putative manganese efflux pump MntP 2 from Clostridium botulinum (strain Langeland / NCTC 10281 / Type F).